Consider the following 94-residue polypeptide: Co-chaperonin GroES (94 aa).

It belongs to the GroES chaperonin family. As to quaternary structure, heptamer of 7 subunits arranged in a ring. Interacts with the chaperonin GroEL.

The protein localises to the cytoplasm. Together with the chaperonin GroEL, plays an essential role in assisting protein folding. The GroEL-GroES system forms a nano-cage that allows encapsulation of the non-native substrate proteins and provides a physical environment optimized to promote and accelerate protein folding. GroES binds to the apical surface of the GroEL ring, thereby capping the opening of the GroEL channel. The polypeptide is Co-chaperonin GroES (Geobacillus stearothermophilus (Bacillus stearothermophilus)).